We begin with the raw amino-acid sequence, 266 residues long: MKQAIGFIDSGVGGLTVVREVLKQLPHEQVYYLGDTARCPYGPRDKEEVAKFTWEMTNFLVDRGIKMLVIACNTATAAALYDIREKLDIPVIGVIQPGSRAALKATRNNKIGVLGTLGTVESMAYPTALKGLNRRVEVDSLACPKFVSVVESGEYKSAIAKKVVAESLLPLKSTKIDTVILGCTHYPLLKPIIENFMGDGVAVINSGEETASEVSALLDYHNLLDATDEEIEHRFFTTGSTQIFKDIAKDWLNMPDMTVEHIKLGK.

Residues 9–10 and 41–42 contribute to the substrate site; these read DS and YG. Catalysis depends on Cys-72, which acts as the Proton donor/acceptor. A substrate-binding site is contributed by 73-74; it reads NT. Cys-183 serves as the catalytic Proton donor/acceptor. 184–185 contacts substrate; the sequence is TH.

It belongs to the aspartate/glutamate racemases family.

The enzyme catalyses L-glutamate = D-glutamate. It functions in the pathway cell wall biogenesis; peptidoglycan biosynthesis. Its function is as follows. Provides the (R)-glutamate required for cell wall biosynthesis. In Listeria monocytogenes serotype 4b (strain CLIP80459), this protein is Glutamate racemase.